Here is a 311-residue protein sequence, read N- to C-terminus: Dermonecrotic toxin (311 aa).

The first 21 residues, 1–21 (MYVHLALILGCWTVVLQGAET), serve as a signal peptide directing secretion. Residues 22–26 (DVGER) constitute a propeptide that is removed on maturation. His-38 is an active-site residue. Mg(2+) is bound by residues Glu-58 and Asp-60. Catalysis depends on His-73, which acts as the Nucleophile. The cysteines at positions 77 and 83 are disulfide-linked. Asp-117 contributes to the Mg(2+) binding site.

Belongs to the arthropod phospholipase D family. Class I subfamily. Requires Mg(2+) as cofactor. As to expression, expressed by the venom gland.

The protein localises to the secreted. The enzyme catalyses an N-(acyl)-sphingosylphosphocholine = an N-(acyl)-sphingosyl-1,3-cyclic phosphate + choline. It carries out the reaction an N-(acyl)-sphingosylphosphoethanolamine = an N-(acyl)-sphingosyl-1,3-cyclic phosphate + ethanolamine. It catalyses the reaction a 1-acyl-sn-glycero-3-phosphocholine = a 1-acyl-sn-glycero-2,3-cyclic phosphate + choline. The catalysed reaction is a 1-acyl-sn-glycero-3-phosphoethanolamine = a 1-acyl-sn-glycero-2,3-cyclic phosphate + ethanolamine. With respect to regulation, catalytic activity and hemolysis are inhibited by divalent ion chelators (1,10-phenanthroline, EDTA, and EGTA). Its function is as follows. Dermonecrotic toxins cleave the phosphodiester linkage between the phosphate and headgroup of certain phospholipids (sphingolipid and lysolipid substrates), forming an alcohol (often choline) and a cyclic phosphate. This toxin acts on sphingomyelin (SM). It may also act on ceramide phosphoethanolamine (CPE), lysophosphatidylcholine (LPC) and lysophosphatidylethanolamine (LPE), but not on lysophosphatidylserine (LPS), and lysophosphatidylglycerol (LPG). It acts by transphosphatidylation, releasing exclusively cyclic phosphate products as second products. Shows complement-dependent hemolysis. Also induces dermonecrosis, vascular permeability, edema, inflammatory response, and platelet aggregation. The protein is Dermonecrotic toxin of Loxosceles laeta (South American recluse spider).